Reading from the N-terminus, the 569-residue chain is Protein THEMIS3 (569 aa).

CABIT regions lie at residues 1–254 (MEQT…ARLD) and 255–523 (RKPR…EERS).

Belongs to the themis family. Specifically expressed in the intestine.

The chain is Protein THEMIS3 (Themis3) from Mus musculus (Mouse).